We begin with the raw amino-acid sequence, 402 residues long: NADH-quinone oxidoreductase subunit D (402 aa).

This sequence belongs to the complex I 49 kDa subunit family. NDH-1 is composed of 14 different subunits. Subunits NuoB, C, D, E, F, and G constitute the peripheral sector of the complex.

It localises to the cell inner membrane. It carries out the reaction a quinone + NADH + 5 H(+)(in) = a quinol + NAD(+) + 4 H(+)(out). Functionally, NDH-1 shuttles electrons from NADH, via FMN and iron-sulfur (Fe-S) centers, to quinones in the respiratory chain. The immediate electron acceptor for the enzyme in this species is believed to be ubiquinone. Couples the redox reaction to proton translocation (for every two electrons transferred, four hydrogen ions are translocated across the cytoplasmic membrane), and thus conserves the redox energy in a proton gradient. This is NADH-quinone oxidoreductase subunit D from Cereibacter sphaeroides (strain ATCC 17025 / ATH 2.4.3) (Rhodobacter sphaeroides).